A 247-amino-acid chain; its full sequence is Probable transcriptional regulatory protein BT_0627 (247 aa).

Belongs to the TACO1 family.

It is found in the cytoplasm. In Bacteroides thetaiotaomicron (strain ATCC 29148 / DSM 2079 / JCM 5827 / CCUG 10774 / NCTC 10582 / VPI-5482 / E50), this protein is Probable transcriptional regulatory protein BT_0627.